The sequence spans 215 residues: Imidazole glycerol phosphate synthase subunit HisH (215 aa).

A Glutamine amidotransferase type-1 domain is found at 9–215 (EVVLVDYGLG…QNFVDYCLER (207 aa)). Residue Cys-85 is the Nucleophile of the active site. Catalysis depends on residues His-193 and Glu-195.

In terms of assembly, heterodimer of HisH and HisF.

It is found in the cytoplasm. It catalyses the reaction 5-[(5-phospho-1-deoxy-D-ribulos-1-ylimino)methylamino]-1-(5-phospho-beta-D-ribosyl)imidazole-4-carboxamide + L-glutamine = D-erythro-1-(imidazol-4-yl)glycerol 3-phosphate + 5-amino-1-(5-phospho-beta-D-ribosyl)imidazole-4-carboxamide + L-glutamate + H(+). The enzyme catalyses L-glutamine + H2O = L-glutamate + NH4(+). It participates in amino-acid biosynthesis; L-histidine biosynthesis; L-histidine from 5-phospho-alpha-D-ribose 1-diphosphate: step 5/9. Functionally, IGPS catalyzes the conversion of PRFAR and glutamine to IGP, AICAR and glutamate. The HisH subunit catalyzes the hydrolysis of glutamine to glutamate and ammonia as part of the synthesis of IGP and AICAR. The resulting ammonia molecule is channeled to the active site of HisF. The chain is Imidazole glycerol phosphate synthase subunit HisH from Natronomonas pharaonis (strain ATCC 35678 / DSM 2160 / CIP 103997 / JCM 8858 / NBRC 14720 / NCIMB 2260 / Gabara) (Halobacterium pharaonis).